Consider the following 774-residue polypeptide: Cleavage and polyadenylation specificity factor subunit 3 (774 aa).

Residues 1–26 (MHHNNHHHGHHGRYQHHHNQHLKRPL) are compositionally biased toward basic residues. A disordered region spans residues 1-30 (MHHNNHHHGHHGRYQHHHNQHLKRPLKGGT). Zn(2+) contacts are provided by histidine 97, histidine 99, aspartate 101, histidine 102, histidine 185, and aspartate 206. Histidine 423 functions as the Proton donor in the catalytic mechanism. Histidine 445 contributes to the Zn(2+) binding site. The interval 636-665 (KEEITKDDIEKEKEKEKEQQDGDDDDDDEI) is disordered. Over residues 638–655 (EITKDDIEKEKEKEKEQQ) the composition is skewed to basic and acidic residues.

The protein belongs to the metallo-beta-lactamase superfamily. RNA-metabolizing metallo-beta-lactamase-like family. CPSF3 subfamily. In terms of assembly, component of the cleavage and polyadenylation specificity factor (CPSF) complex. Zn(2+) is required as a cofactor.

It localises to the nucleus. Functionally, component of the cleavage and polyadenylation specificity factor (CPSF) complex that play a key role in pre-mRNA 3'-end formation, recognizing the AAUAAA signal sequence and interacting with poly(A) polymerase and other factors to bring about cleavage and poly(A) addition. Has endonuclease activity, and functions as an mRNA 3'-end-processing endonuclease. The protein is Cleavage and polyadenylation specificity factor subunit 3 (cpsf3) of Dictyostelium discoideum (Social amoeba).